The following is a 507-amino-acid chain: Alkyl hydroperoxide reductase subunit F (507 aa).

207–222 (DVLIVGGGPASGSAAI) is an FAD binding site. Cys335 and Cys338 are disulfide-bonded. 347–361 (DVAVIGGGNSGVEAA) contributes to the NAD(+) binding site. 467–477 (TNVPGIFAAGD) serves as a coordination point for FAD.

The protein belongs to the class-II pyridine nucleotide-disulfide oxidoreductase family. Homodimer. FAD is required as a cofactor.

Its function is as follows. Serves to protect the cell against DNA damage by alkyl hydroperoxides. It can use either NADH or NADPH as electron donor for direct reduction of redox dyes or of alkyl hydroperoxides when combined with the AhpC protein. The protein is Alkyl hydroperoxide reductase subunit F (ahpF) of Staphylococcus epidermidis (strain ATCC 35984 / DSM 28319 / BCRC 17069 / CCUG 31568 / BM 3577 / RP62A).